The primary structure comprises 119 residues: Integration host factor subunit alpha (119 aa).

The interval 96–119 (INGQQGSGKMNGEASHEQLSAEPE) is disordered.

This sequence belongs to the bacterial histone-like protein family. Heterodimer of an alpha and a beta chain.

This protein is one of the two subunits of integration host factor, a specific DNA-binding protein that functions in genetic recombination as well as in transcriptional and translational control. In Bradyrhizobium sp. (strain BTAi1 / ATCC BAA-1182), this protein is Integration host factor subunit alpha.